Reading from the N-terminus, the 427-residue chain is Gamma-glutamyl phosphate reductase (427 aa).

This sequence belongs to the gamma-glutamyl phosphate reductase family.

It is found in the cytoplasm. It catalyses the reaction L-glutamate 5-semialdehyde + phosphate + NADP(+) = L-glutamyl 5-phosphate + NADPH + H(+). The protein operates within amino-acid biosynthesis; L-proline biosynthesis; L-glutamate 5-semialdehyde from L-glutamate: step 2/2. Its function is as follows. Catalyzes the NADPH-dependent reduction of L-glutamate 5-phosphate into L-glutamate 5-semialdehyde and phosphate. The product spontaneously undergoes cyclization to form 1-pyrroline-5-carboxylate. The sequence is that of Gamma-glutamyl phosphate reductase from Rhodospirillum rubrum (strain ATCC 11170 / ATH 1.1.1 / DSM 467 / LMG 4362 / NCIMB 8255 / S1).